Consider the following 557-residue polypeptide: Dihydroxy-acid dehydratase (557 aa).

C49 provides a ligand contact to [2Fe-2S] cluster. D81 is a binding site for Mg(2+). C122 contributes to the [2Fe-2S] cluster binding site. D123 and K124 together coordinate Mg(2+). K124 carries the N6-carboxylysine modification. C194 is a binding site for [2Fe-2S] cluster. E446 contributes to the Mg(2+) binding site. Catalysis depends on S472, which acts as the Proton acceptor.

The protein belongs to the IlvD/Edd family. As to quaternary structure, homodimer. Requires [2Fe-2S] cluster as cofactor. It depends on Mg(2+) as a cofactor.

The enzyme catalyses (2R)-2,3-dihydroxy-3-methylbutanoate = 3-methyl-2-oxobutanoate + H2O. It catalyses the reaction (2R,3R)-2,3-dihydroxy-3-methylpentanoate = (S)-3-methyl-2-oxopentanoate + H2O. Its pathway is amino-acid biosynthesis; L-isoleucine biosynthesis; L-isoleucine from 2-oxobutanoate: step 3/4. It functions in the pathway amino-acid biosynthesis; L-valine biosynthesis; L-valine from pyruvate: step 3/4. Its function is as follows. Functions in the biosynthesis of branched-chain amino acids. Catalyzes the dehydration of (2R,3R)-2,3-dihydroxy-3-methylpentanoate (2,3-dihydroxy-3-methylvalerate) into 2-oxo-3-methylpentanoate (2-oxo-3-methylvalerate) and of (2R)-2,3-dihydroxy-3-methylbutanoate (2,3-dihydroxyisovalerate) into 2-oxo-3-methylbutanoate (2-oxoisovalerate), the penultimate precursor to L-isoleucine and L-valine, respectively. This is Dihydroxy-acid dehydratase from Prochlorococcus marinus (strain MIT 9301).